The chain runs to 387 residues: Putative ankyrin repeat protein RBE_0984 (387 aa).

ANK repeat units follow at residues 50 to 79 (YGNT…DKDI), 88 to 119 (HRET…AINV), 123 to 154 (RKHT…VINV), 159 to 188 (HKDS…KENI), and 210 to 239 (VCKM…LKGE). Coiled-coil stretches lie at residues 251-278 (FEDI…KKCE) and 311-352 (SISA…ALEK).

The polypeptide is Putative ankyrin repeat protein RBE_0984 (Rickettsia bellii (strain RML369-C)).